Reading from the N-terminus, the 373-residue chain is tRNA-specific 2-thiouridylase MnmA (373 aa).

ATP is bound by residues 12–19 (GMSGGVDS) and Met38. An interaction with target base in tRNA region spans residues 98 to 100 (NPD). Residue Cys103 is the Nucleophile of the active site. A disulfide bridge connects residues Cys103 and Cys200. Position 127 (Gly127) interacts with ATP. The segment at 150-152 (KDQ) is interaction with tRNA. The active-site Cysteine persulfide intermediate is Cys200. The tract at residues 312-313 (RY) is interaction with tRNA.

It belongs to the MnmA/TRMU family.

The protein localises to the cytoplasm. It carries out the reaction S-sulfanyl-L-cysteinyl-[protein] + uridine(34) in tRNA + AH2 + ATP = 2-thiouridine(34) in tRNA + L-cysteinyl-[protein] + A + AMP + diphosphate + H(+). Functionally, catalyzes the 2-thiolation of uridine at the wobble position (U34) of tRNA, leading to the formation of s(2)U34. The protein is tRNA-specific 2-thiouridylase MnmA of Streptococcus pneumoniae (strain 70585).